The chain runs to 102 residues: Large ribosomal subunit protein uL24 (102 aa).

The protein belongs to the universal ribosomal protein uL24 family. As to quaternary structure, part of the 50S ribosomal subunit.

Functionally, one of two assembly initiator proteins, it binds directly to the 5'-end of the 23S rRNA, where it nucleates assembly of the 50S subunit. One of the proteins that surrounds the polypeptide exit tunnel on the outside of the subunit. The protein is Large ribosomal subunit protein uL24 of Burkholderia mallei (strain NCTC 10229).